The chain runs to 124 residues: Small ribosomal subunit protein uS12 (124 aa).

Residues 1-30 (MPTIQQLVRKGRRDKVAKVKTAALKGSPQR) form a disordered region. The residue at position 89 (D89) is a 3-methylthioaspartic acid. Residues 105-124 (QGVKNRKQARSRYGAKKEKS) form a disordered region. Residues 108–118 (KNRKQARSRYG) are compositionally biased toward basic residues.

The protein belongs to the universal ribosomal protein uS12 family. Part of the 30S ribosomal subunit. Contacts proteins S8 and S17. May interact with IF1 in the 30S initiation complex.

In terms of biological role, with S4 and S5 plays an important role in translational accuracy. Interacts with and stabilizes bases of the 16S rRNA that are involved in tRNA selection in the A site and with the mRNA backbone. Located at the interface of the 30S and 50S subunits, it traverses the body of the 30S subunit contacting proteins on the other side and probably holding the rRNA structure together. The combined cluster of proteins S8, S12 and S17 appears to hold together the shoulder and platform of the 30S subunit. The protein is Small ribosomal subunit protein uS12 of Mycobacterium intracellulare.